Consider the following 487-residue polypeptide: NADH-quinone oxidoreductase subunit N (487 aa).

Helical transmembrane passes span 18-38, 44-64, 84-104, 116-136, 169-189, 211-231, 242-262, 277-297, 305-325, 333-353, 377-397, 410-430, and 457-477; these read LVPE…DLFV, VWTH…LATG, VMKT…WTYL, VLVL…SLLM, FVLG…VYGA, LLTG…AAPF, APAP…FGMA, WHLL…LMAI, MLAY…AGGG, MFYA…IIAL, AGLV…LGFW, DMLW…YYYL, and VLGV…PIMV.

This sequence belongs to the complex I subunit 2 family. As to quaternary structure, NDH-1 is composed of 14 different subunits. Subunits NuoA, H, J, K, L, M, N constitute the membrane sector of the complex.

Its subcellular location is the cell inner membrane. The enzyme catalyses a quinone + NADH + 5 H(+)(in) = a quinol + NAD(+) + 4 H(+)(out). Functionally, NDH-1 shuttles electrons from NADH, via FMN and iron-sulfur (Fe-S) centers, to quinones in the respiratory chain. The immediate electron acceptor for the enzyme in this species is believed to be ubiquinone. Couples the redox reaction to proton translocation (for every two electrons transferred, four hydrogen ions are translocated across the cytoplasmic membrane), and thus conserves the redox energy in a proton gradient. This chain is NADH-quinone oxidoreductase subunit N, found in Xanthomonas euvesicatoria pv. vesicatoria (strain 85-10) (Xanthomonas campestris pv. vesicatoria).